A 348-amino-acid chain; its full sequence is Histidinol-phosphate aminotransferase (348 aa).

Position 211 is an N6-(pyridoxal phosphate)lysine (lysine 211).

It belongs to the class-II pyridoxal-phosphate-dependent aminotransferase family. Histidinol-phosphate aminotransferase subfamily. In terms of assembly, homodimer. Requires pyridoxal 5'-phosphate as cofactor.

It catalyses the reaction L-histidinol phosphate + 2-oxoglutarate = 3-(imidazol-4-yl)-2-oxopropyl phosphate + L-glutamate. Its pathway is amino-acid biosynthesis; L-histidine biosynthesis; L-histidine from 5-phospho-alpha-D-ribose 1-diphosphate: step 7/9. The chain is Histidinol-phosphate aminotransferase from Pseudomonas entomophila (strain L48).